We begin with the raw amino-acid sequence, 435 residues long: U-box domain-containing protein 21 (435 aa).

One can recognise a U-box domain in the interval 30 to 104; the sequence is TIPPEFQCPI…QGWCVEKGSP (75 aa). ARM repeat units lie at residues 202–241, 245–285, 288–327, and 329–369; these read LEGISKLASATSFRCVAGLLKSTDDSVRQNAAFIMKEILS, TRVH…QMVL, PEIASEFLEIGLVSITVEMIVDAENSVCEKALAVLDAICE, and EHGR…KLWK.

It carries out the reaction S-ubiquitinyl-[E2 ubiquitin-conjugating enzyme]-L-cysteine + [acceptor protein]-L-lysine = [E2 ubiquitin-conjugating enzyme]-L-cysteine + N(6)-ubiquitinyl-[acceptor protein]-L-lysine.. The protein operates within protein modification; protein ubiquitination. In terms of biological role, functions as an E3 ubiquitin ligase. The chain is U-box domain-containing protein 21 (PUB21) from Arabidopsis thaliana (Mouse-ear cress).